Here is a 275-residue protein sequence, read N- to C-terminus: Hemin import ATP-binding protein HmuV (275 aa).

One can recognise an ABC transporter domain in the interval 2-242 (LKAAGIGVRL…EWIETGFGLQ (241 aa)). 34-41 (GPNGAGKS) provides a ligand contact to ATP.

This sequence belongs to the ABC transporter superfamily. Heme (hemin) importer (TC 3.A.1.14.5) family. The complex is composed of two ATP-binding proteins (HmuV), two transmembrane proteins (HmuU) and a solute-binding protein (HmuT).

It localises to the cell inner membrane. In terms of biological role, part of the ABC transporter complex HmuTUV involved in hemin import. Responsible for energy coupling to the transport system. This is Hemin import ATP-binding protein HmuV from Gloeobacter violaceus (strain ATCC 29082 / PCC 7421).